Consider the following 76-residue polypeptide: MPQSSRYSDEHVEQLLSEMVNVLEKHHAPTDLALMVLGNMVTNLINTSIAPAQRQVMARSFAEALQASIKKADKAH.

The protein belongs to the UPF0352 family.

This is UPF0352 protein PC1_1633 from Pectobacterium carotovorum subsp. carotovorum (strain PC1).